Reading from the N-terminus, the 158-residue chain is Crossover junction endodeoxyribonuclease RuvC (158 aa).

Catalysis depends on residues aspartate 7, glutamate 67, and aspartate 140. Residues aspartate 7, glutamate 67, and aspartate 140 each coordinate Mg(2+).

The protein belongs to the RuvC family. In terms of assembly, homodimer which binds Holliday junction (HJ) DNA. The HJ becomes 2-fold symmetrical on binding to RuvC with unstacked arms; it has a different conformation from HJ DNA in complex with RuvA. In the full resolvosome a probable DNA-RuvA(4)-RuvB(12)-RuvC(2) complex forms which resolves the HJ. Mg(2+) serves as cofactor.

The protein resides in the cytoplasm. The catalysed reaction is Endonucleolytic cleavage at a junction such as a reciprocal single-stranded crossover between two homologous DNA duplexes (Holliday junction).. Its function is as follows. The RuvA-RuvB-RuvC complex processes Holliday junction (HJ) DNA during genetic recombination and DNA repair. Endonuclease that resolves HJ intermediates. Cleaves cruciform DNA by making single-stranded nicks across the HJ at symmetrical positions within the homologous arms, yielding a 5'-phosphate and a 3'-hydroxyl group; requires a central core of homology in the junction. The consensus cleavage sequence is 5'-(A/T)TT(C/G)-3'. Cleavage occurs on the 3'-side of the TT dinucleotide at the point of strand exchange. HJ branch migration catalyzed by RuvA-RuvB allows RuvC to scan DNA until it finds its consensus sequence, where it cleaves and resolves the cruciform DNA. The polypeptide is Crossover junction endodeoxyribonuclease RuvC (Dictyoglomus turgidum (strain DSM 6724 / Z-1310)).